A 173-amino-acid chain; its full sequence is MAARSAALKIDWVKVTSSLGLRGQTAASLQAFKKRNDDARRKVQILSEQPQTVDFAHYRQILKNQAVVDEIENQFKNFKPATYDVSRQLKAIEAFEAQAVQNAEQTKGKVEAELRNLQKTLENIETARPFDELTVDEVAAAQPEIDEKTASLVSKGRWMPAGYKERFGDMSVV.

Residues 1–23 (MAARSAALKIDWVKVTSSLGLRG) constitute a mitochondrion transit peptide.

This sequence belongs to the ATPase d subunit family. In terms of assembly, F-type ATPases have 2 components, CF(1) - the catalytic core - and CF(0) - the membrane proton channel. In yeast, the dimeric form of ATP synthase consists of 17 polypeptides: alpha, beta, gamma, delta, epsilon, 4 (B), 5 (OSCP), 6 (A), 8, 9 (C), d, E (Tim11), f, g, h, i/j and k.

The protein localises to the mitochondrion inner membrane. Its function is as follows. Mitochondrial membrane ATP synthase (F(1)F(0) ATP synthase or Complex V) produces ATP from ADP in the presence of a proton gradient across the membrane which is generated by electron transport complexes of the respiratory chain. F-type ATPases consist of two structural domains, F(1) - containing the extramembraneous catalytic core, and F(0) - containing the membrane proton channel, linked together by a central stalk and a peripheral stalk. During catalysis, ATP synthesis in the catalytic domain of F(1) is coupled via a rotary mechanism of the central stalk subunits to proton translocation. Part of the complex F(0) domain and the peripheric stalk, which acts as a stator to hold the catalytic alpha(3)beta(3) subcomplex and subunit a/ATP6 static relative to the rotary elements. The polypeptide is ATP synthase subunit d, mitochondrial (atp7) (Aspergillus terreus (strain NIH 2624 / FGSC A1156)).